The chain runs to 604 residues: Elongation factor 4 1 (604 aa).

The tr-type G domain maps to 10-191 (EHIRNFCIIA…AIVDSVPAPT (182 aa)). GTP-binding positions include 22-27 (DHGKST) and 138-141 (NKID).

It belongs to the TRAFAC class translation factor GTPase superfamily. Classic translation factor GTPase family. LepA subfamily.

It is found in the cell inner membrane. The catalysed reaction is GTP + H2O = GDP + phosphate + H(+). Functionally, required for accurate and efficient protein synthesis under certain stress conditions. May act as a fidelity factor of the translation reaction, by catalyzing a one-codon backward translocation of tRNAs on improperly translocated ribosomes. Back-translocation proceeds from a post-translocation (POST) complex to a pre-translocation (PRE) complex, thus giving elongation factor G a second chance to translocate the tRNAs correctly. Binds to ribosomes in a GTP-dependent manner. The protein is Elongation factor 4 1 of Rhodopirellula baltica (strain DSM 10527 / NCIMB 13988 / SH1).